We begin with the raw amino-acid sequence, 95 residues long: Defensin-like protein 247 (95 aa).

The signal sequence occupies residues 1 to 24 (MKFAAIFLVTCVFFSLFSSNLSQG). 4 cysteine pairs are disulfide-bonded: C37–C94, C48–C77, C56–C87, and C75–C89.

The protein belongs to the DEFL family.

The protein resides in the secreted. This chain is Defensin-like protein 247 (SCRL6), found in Arabidopsis thaliana (Mouse-ear cress).